A 126-amino-acid polypeptide reads, in one-letter code: 13 kDa ribonucleoprotein-associated protein (126 aa).

Belongs to the eukaryotic ribosomal protein eL8 family. As to quaternary structure, component of the U3 snoRNP particle. Binds to the C'/D and B/C motifs in U3 snoRNA. Component of the 25S U4/U6.U5 tri-snRNP particle, a subcomplex of the spliceosome. Binds to the 5' stem-loop of U4 snRNA.

It is found in the nucleus. It localises to the nucleolus. Common component of the spliceosome and rRNA processing machinery. In association with the spliceosomal U4/U6.U5 tri-snRNP particle, required for splicing of pre-mRNA. In association with box C/D snoRNPs, required for processing of pre-ribosomal RNA (rRNA) and site-specific 2'-O-methylation of substrate RNAs. Essential for the accumulation and stability of U4 snRNA, U6 snRNA, and box C/D snoRNAs. This Candida albicans (strain SC5314 / ATCC MYA-2876) (Yeast) protein is 13 kDa ribonucleoprotein-associated protein (SNU13).